The chain runs to 312 residues: Pseudouridine-5'-phosphate glycosidase 2 (312 aa).

Catalysis depends on E31, which acts as the Proton donor. Residues K93 and V113 each contribute to the substrate site. Residue D145 coordinates Mn(2+). Residue 147–149 (SAD) participates in substrate binding. The active-site Nucleophile is the K166.

This sequence belongs to the pseudouridine-5'-phosphate glycosidase family. In terms of assembly, homotrimer. Mn(2+) is required as a cofactor.

The enzyme catalyses D-ribose 5-phosphate + uracil = psi-UMP + H2O. Functionally, catalyzes the reversible cleavage of pseudouridine 5'-phosphate (PsiMP) to ribose 5-phosphate and uracil. Functions biologically in the cleavage direction, as part of a pseudouridine degradation pathway. This Photorhabdus laumondii subsp. laumondii (strain DSM 15139 / CIP 105565 / TT01) (Photorhabdus luminescens subsp. laumondii) protein is Pseudouridine-5'-phosphate glycosidase 2.